An 843-amino-acid chain; its full sequence is OTU domain-containing protein 7B (843 aa).

The tract at residues 50 to 88 (GNLPPSFSEGSGGSRTPEKGFSDREPTRPPRPILQRQDD) is disordered. Residues 65–77 (TPEKGFSDREPTR) show a composition bias toward basic and acidic residues. The residue at position 100 (S100) is a Phosphoserine. The TRAF-binding stretch occupies residues 152–401 (ERDLIEQSML…AVDPGKGWEW (250 aa)). The segment at 167–440 (AGRLNWWVSV…VKWIPLSSDA (274 aa)) is catalytic. The 183-residue stretch at 183 to 365 (LLPLATTGDG…QAHFSALVSM (183 aa)) folds into the OTU domain. The interval 187–193 (ATTGDGN) is regulatory loop. The active site involves D191. C194 serves as the catalytic Nucleophile. H358 functions as the Proton acceptor in the catalytic mechanism. Disordered stretches follow at residues 442–587 (APLA…GGSK) and 652–711 (IMNG…CQEP). Basic and acidic residues-rich tracts occupy residues 456-471 (DEPRSTPESGDSDKES) and 488-500 (SKRDREKDKKRAD). Residues S464, S467, and S471 each carry the phosphoserine modification. The Nuclear localization signal motif lies at 483 to 498 (RRKEKSKRDREKDKKR). Residues 531-543 (KPGGVGTGLGGSS) are compositionally biased toward gly residues. Residues 665 to 675 (KKPEPDAREEQ) show a composition bias toward basic and acidic residues. Position 729 is a phosphothreonine (T729). The tract at residues 732 to 792 (RQCPPGRPYP…PEPDGWAGGL (61 aa)) is disordered. The A20-type zinc-finger motif lies at 796–831 (PPTQTKCKQPNCSFYGHPETNNFCSCCYREELRRRE). Zn(2+)-binding residues include C802, C807, C819, and C822.

The protein belongs to the peptidase C64 family. As to quaternary structure, interacts with ZAP70 in activated T cells, but not in resting T cells. Interacts with TRAF3. Interacts with TRAF6. Interacts with PARK7, leading to inhibit deubiquitinase activity. Interacts with EGFR, ITCH and NEDD4. In terms of processing, phosphorylated by EGFR. In terms of tissue distribution, widely expressed. Abundant in kidney, heart and fetal liver. Expressed differentially among B-cells at distinct developmental stages. Higher expression seen in primary immature B-cells as compared to the mature cells.

Its subcellular location is the cytoplasm. It localises to the nucleus. The enzyme catalyses Thiol-dependent hydrolysis of ester, thioester, amide, peptide and isopeptide bonds formed by the C-terminal Gly of ubiquitin (a 76-residue protein attached to proteins as an intracellular targeting signal).. Deubiquitinase activity is inhibited following interaction with PARK7. Negative regulator of the non-canonical NF-kappa-B pathway that acts by mediating deubiquitination of TRAF3, an inhibitor of the NF-kappa-B pathway, thereby acting as a negative regulator of B-cell responses. In response to non-canonical NF-kappa-B stimuli, deubiquitinates 'Lys-48'-linked polyubiquitin chains of TRAF3, preventing TRAF3 proteolysis and over-activation of non-canonical NF-kappa-B. Negatively regulates mucosal immunity against infections. Deubiquitinates ZAP70, and thereby regulates T cell receptor (TCR) signaling that leads to the activation of NF-kappa-B. Plays a role in T cell homeostasis and is required for normal T cell responses, including production of IFNG and IL2. Mediates deubiquitination of EGFR. Has deubiquitinating activity toward 'Lys-11', 'Lys-48' and 'Lys-63'-linked polyubiquitin chains. Has a much higher catalytic rate with 'Lys-11'-linked polyubiquitin chains (in vitro); however the physiological significance of these data are unsure. Hydrolyzes both linear and branched forms of polyubiquitin. Acts as a regulator of mTORC1 and mTORC2 assembly by mediating 'Lys-63'-linked deubiquitination of MLST8, thereby promoting assembly of the mTORC2 complex, while inibiting formation of the mTORC1 complex. The sequence is that of OTU domain-containing protein 7B (OTUD7B) from Homo sapiens (Human).